We begin with the raw amino-acid sequence, 222 residues long: Coiled-coil domain-containing protein 43 homolog (222 aa).

Residues 80-111 (ETENKLKLTNLKLEQELKIKETTQSEINEEEK) are a coiled coil. 2 disordered regions span residues 102 to 126 (TQSEINEEEKYENPYHKMSREEQKK) and 159 to 222 (EDNK…KRRL). 2 stretches are compositionally biased toward basic and acidic residues: residues 112 to 126 (YENPYHKMSREEQKK) and 175 to 212 (RIADEEKAKREKSKIEHQKKVQRDKEALEKQKRDEEKK). The stretch at 168-222 (GENLNAKRIADEEKAKREKSKIEHQKKVQRDKEALEKQKRDEEKKKTVKKEKRRL) forms a coiled coil. Over residues 213 to 222 (KTVKKEKRRL) the composition is skewed to basic residues.

This sequence belongs to the CCDC43 family.

This Dictyostelium discoideum (Social amoeba) protein is Coiled-coil domain-containing protein 43 homolog.